Here is a 352-residue protein sequence, read N- to C-terminus: Zinc finger protein 185 (352 aa).

2 disordered regions span residues 1–73 (MTTE…ELQS) and 86–121 (DVLP…ITPP). S18 bears the Phosphoserine mark. The span at 61–72 (KKTTSSPTQELQ) shows a compositional bias: polar residues. The residue at position 137 (T137) is a Phosphothreonine. A compositionally biased stretch (polar residues) spans 251–268 (VSSGKPVSSHCDSPSSIE). Positions 251–287 (VSSGKPVSSHCDSPSSIEDSLDLAKKPPHEGTPSERP) are disordered. A compositionally biased stretch (basic and acidic residues) spans 272 to 287 (DLAKKPPHEGTPSERP). The region spanning 292 to 347 (CTYCSHEIQDCPKITLEHLGICCHEYCFKCGICNKPMGDLLDQIFIHRDTIHCGKC) is the LIM zinc-binding domain.

Expressed in skin, kidney, ovary, testis. Also expressed in brain, cartilage, heart, lung, spleen and thymus.

The protein resides in the cytoplasm. The protein localises to the cytoskeleton. It is found in the cell junction. It localises to the focal adhesion. Functionally, may be involved in the regulation of cellular proliferation and/or differentiation. The sequence is that of Zinc finger protein 185 (Znf185) from Mus musculus (Mouse).